A 323-amino-acid polypeptide reads, in one-letter code: Acetyl-coenzyme A carboxylase carboxyl transferase subunit alpha (323 aa).

The CoA carboxyltransferase C-terminal domain maps to 40 to 293 (LAEKSLQLTK…RKALAESLKT (254 aa)).

The protein belongs to the AccA family. As to quaternary structure, acetyl-CoA carboxylase is a heterohexamer composed of biotin carboxyl carrier protein (AccB), biotin carboxylase (AccC) and two subunits each of ACCase subunit alpha (AccA) and ACCase subunit beta (AccD).

The protein localises to the cytoplasm. The enzyme catalyses N(6)-carboxybiotinyl-L-lysyl-[protein] + acetyl-CoA = N(6)-biotinyl-L-lysyl-[protein] + malonyl-CoA. It participates in lipid metabolism; malonyl-CoA biosynthesis; malonyl-CoA from acetyl-CoA: step 1/1. Its function is as follows. Component of the acetyl coenzyme A carboxylase (ACC) complex. First, biotin carboxylase catalyzes the carboxylation of biotin on its carrier protein (BCCP) and then the CO(2) group is transferred by the carboxyltransferase to acetyl-CoA to form malonyl-CoA. The chain is Acetyl-coenzyme A carboxylase carboxyl transferase subunit alpha from Polynucleobacter necessarius subsp. necessarius (strain STIR1).